The primary structure comprises 158 residues: Cytochrome b6-f complex subunit 4 (158 aa).

3 consecutive transmembrane segments (helical) span residues 34–54 (LLYI…GLAV), 93–113 (LLGV…PFLE), and 129–149 (TVFL…TLPI).

The protein belongs to the cytochrome b family. PetD subfamily. As to quaternary structure, the 4 large subunits of the cytochrome b6-f complex are cytochrome b6, subunit IV (17 kDa polypeptide, petD), cytochrome f and the Rieske protein, while the 4 small subunits are petG, petL, petM and petN. The complex functions as a dimer.

Its subcellular location is the plastid. It localises to the chloroplast thylakoid membrane. Its function is as follows. Component of the cytochrome b6-f complex, which mediates electron transfer between photosystem II (PSII) and photosystem I (PSI), cyclic electron flow around PSI, and state transitions. The sequence is that of Cytochrome b6-f complex subunit 4 from Liriodendron tulipifera (Tuliptree).